The following is a 387-amino-acid chain: Phosphoglycerate kinase (387 aa).

Substrate-binding positions include 21 to 23 (DLN), Arg36, 59 to 62 (HLGR), Arg113, and Arg146. Residues Lys197, Glu314, and 340-343 (GGDT) each bind ATP.

Belongs to the phosphoglycerate kinase family. As to quaternary structure, monomer.

It localises to the cytoplasm. The enzyme catalyses (2R)-3-phosphoglycerate + ATP = (2R)-3-phospho-glyceroyl phosphate + ADP. It functions in the pathway carbohydrate degradation; glycolysis; pyruvate from D-glyceraldehyde 3-phosphate: step 2/5. The sequence is that of Phosphoglycerate kinase from Pseudomonas aeruginosa (strain ATCC 15692 / DSM 22644 / CIP 104116 / JCM 14847 / LMG 12228 / 1C / PRS 101 / PAO1).